We begin with the raw amino-acid sequence, 447 residues long: Argininosuccinate synthase (447 aa).

ATP-binding positions include 17–25 (AFSGGLDTS) and A43. L-citrulline is bound at residue Y99. 2 residues coordinate ATP: G129 and T131. T131, N135, and D136 together coordinate L-aspartate. Residue N135 participates in L-citrulline binding. Residue D136 coordinates ATP. R139 and S192 together coordinate L-citrulline. D194 contacts ATP. L-citrulline-binding residues include T201, E203, and E280.

The protein belongs to the argininosuccinate synthase family. Type 2 subfamily. Homotetramer.

Its subcellular location is the cytoplasm. It carries out the reaction L-citrulline + L-aspartate + ATP = 2-(N(omega)-L-arginino)succinate + AMP + diphosphate + H(+). It functions in the pathway amino-acid biosynthesis; L-arginine biosynthesis; L-arginine from L-ornithine and carbamoyl phosphate: step 2/3. The polypeptide is Argininosuccinate synthase (argG) (Salmonella typhi).